The following is a 446-amino-acid chain: Na(+)-translocating NADH-quinone reductase subunit A (446 aa).

The protein belongs to the NqrA family. In terms of assembly, composed of six subunits; NqrA, NqrB, NqrC, NqrD, NqrE and NqrF.

It carries out the reaction a ubiquinone + n Na(+)(in) + NADH + H(+) = a ubiquinol + n Na(+)(out) + NAD(+). Its function is as follows. NQR complex catalyzes the reduction of ubiquinone-1 to ubiquinol by two successive reactions, coupled with the transport of Na(+) ions from the cytoplasm to the periplasm. NqrA to NqrE are probably involved in the second step, the conversion of ubisemiquinone to ubiquinol. In Vibrio atlanticus (strain LGP32) (Vibrio splendidus (strain Mel32)), this protein is Na(+)-translocating NADH-quinone reductase subunit A.